The primary structure comprises 722 residues: MKTMQGKGSGRRLRGALLVTMAASGAIGLAGCGGSNDNTTTTTPTNVKPSFVGTVTVTHFDGVSDDLLTAGLGAAGLASATAPTVANATAPTAAELRRLAIYNNYRALVDTNAKGGYGTLYGPNVDASGNVTSGSGMVPGVEYVAYSDDGSGQQNVVLLVQIPDAFDAANPCIITATSSGSRGIYGAISTGEWGLKRKCAVAYTDKGTRAGPHDLATDTVPLQDGTRTTRAAAGSKAQFAAPLTDTQLAAFNLATPNRLAFKHAHSQRNPEKDWGRFTLQAVQFAFWAINDKLSGGSAPNGSALAVRPDNTIVIASSVSNGGGAAIAAAEQDTTHLIDGVAVGEPGLNLPASANVQVQRGGVTLPVTGKPLFDYVSYANAFRLCAALSSSVSGAPTQSFFAGNIGWPASVQANRCAALHANGLLSSTTTAAQADEALQKMRTYGWEPESDLVHASMAYFEIDPSVATTFGNALARASVLDNLCNFSFAAVDTSFHPTTVNATALAQLASTGNGIPPTTGVQLINNLAQGGATQSKQSVDSSGTQAANLDGALCLRKLLTGADAASQALQLGISQTLRTGNLGGRPALIVQGRNDALLPVNHGARPYLGLNAQVDTSSKLSYIEVTNAQHFDGFIDLVPGYDTLFVPLVLYEQRALDAVYANLKNGTPLPPSQVVRTTPRGGTAGSAPAIAATNVPNFTNTPAVADRISVSVSGGVATVSVPN.

Residues 1 to 25 form the signal peptide; that stretch reads MKTMQGKGSGRRLRGALLVTMAASG. Ser-319 acts as the Charge relay system in catalysis.

This sequence belongs to the D-(-)-3-hydroxybutyrate oligomer hydrolase family.

It localises to the secreted. It carries out the reaction (3R)-hydroxybutanoate dimer + H2O = 2 (R)-3-hydroxybutanoate + H(+). The protein operates within lipid metabolism; butanoate metabolism. Inhibited by diisopropylfluorophosphate (DFP). Functionally, participates in the degradation of poly-3-hydroxybutyrate (PHB). It works downstream of poly(3-hydroxybutyrate) depolymerase, hydrolyzing D(-)-3-hydroxybutyrate oligomers of various length (3HB-oligomers) into 3HB-monomers. This chain is D-(-)-3-hydroxybutyrate oligomer hydrolase, found in Ralstonia pickettii (Burkholderia pickettii).